The chain runs to 473 residues: Ribulose bisphosphate carboxylase large chain 2 (473 aa).

Residues Asn116 and Thr166 each contribute to the substrate site. Catalysis depends on Lys168, which acts as the Proton acceptor. Position 170 (Lys170) interacts with substrate. Residues Lys194, Asp196, and Glu197 each contribute to the Mg(2+) site. Lys194 is subject to N6-carboxylysine. Residue His287 is the Proton acceptor of the active site. Residues Arg288, His320, and Ser372 each coordinate substrate.

This sequence belongs to the RuBisCO large chain family. Type I subfamily. Heterohexadecamer of 8 large chains and 8 small chains. Mg(2+) is required as a cofactor.

It carries out the reaction 2 (2R)-3-phosphoglycerate + 2 H(+) = D-ribulose 1,5-bisphosphate + CO2 + H2O. The catalysed reaction is D-ribulose 1,5-bisphosphate + O2 = 2-phosphoglycolate + (2R)-3-phosphoglycerate + 2 H(+). Its function is as follows. RuBisCO catalyzes two reactions: the carboxylation of D-ribulose 1,5-bisphosphate, the primary event in carbon dioxide fixation, as well as the oxidative fragmentation of the pentose substrate. Both reactions occur simultaneously and in competition at the same active site. The protein is Ribulose bisphosphate carboxylase large chain 2 of Acidithiobacillus ferrooxidans (strain ATCC 23270 / DSM 14882 / CIP 104768 / NCIMB 8455) (Ferrobacillus ferrooxidans (strain ATCC 23270)).